We begin with the raw amino-acid sequence, 368 residues long: Quinolinate synthase (368 aa).

Iminosuccinate-binding residues include His46 and Ser63. A [4Fe-4S] cluster-binding site is contributed by Cys110. Iminosuccinate is bound by residues 141–143 and Ser162; that span reads YVN. Cys230 contacts [4Fe-4S] cluster. Iminosuccinate contacts are provided by residues 256–258 and Thr273; that span reads HPE. [4Fe-4S] cluster is bound at residue Cys320.

This sequence belongs to the quinolinate synthase family. Type 3 subfamily. The cofactor is [4Fe-4S] cluster.

Its subcellular location is the cytoplasm. The enzyme catalyses iminosuccinate + dihydroxyacetone phosphate = quinolinate + phosphate + 2 H2O + H(+). Its pathway is cofactor biosynthesis; NAD(+) biosynthesis; quinolinate from iminoaspartate: step 1/1. Its function is as follows. Catalyzes the condensation of iminoaspartate with dihydroxyacetone phosphate to form quinolinate. This chain is Quinolinate synthase, found in Bacillus cereus (strain ATCC 14579 / DSM 31 / CCUG 7414 / JCM 2152 / NBRC 15305 / NCIMB 9373 / NCTC 2599 / NRRL B-3711).